Reading from the N-terminus, the 306-residue chain is Peroxisomal protein PEX21 (306 aa).

A Glycyl cysteine thioester (Cys-Gly) (interchain with G-Cter in ubiquitin) cross-link involves residue C4. Residues 172–203 (ERQVQDDEKEQQQDKDDDFHLKETSPLDEDQR) are disordered.

This sequence belongs to the peroxin-21 family. In terms of assembly, interacts with PEX7. Post-translationally, monoubiquitinated at Cys-4; acts as a signal for PEX21 extraction and is required for proper export from peroxisomes and recycling.

It localises to the cytoplasm. It is found in the cytosol. The protein resides in the peroxisome. Its function is as follows. Mediates peroxisomal import of proteins containing a C-terminal PTS2-type peroxisomal targeting signal via its interaction with PEX7. Interaction with PEX7 only takes place when PEX7 is associated with cargo proteins containing a PTS2 peroxisomal targeting signal. PEX7 along with PTS2-containing cargo proteins are then translocated through the PEX13-PEX14 docking complex together with PEX21. This chain is Peroxisomal protein PEX21 (PEX21), found in Kluyveromyces lactis (strain ATCC 8585 / CBS 2359 / DSM 70799 / NBRC 1267 / NRRL Y-1140 / WM37) (Yeast).